Consider the following 271-residue polypeptide: Serine O-acetyltransferase (271 aa).

Cysteine 112 (acyl-thioester intermediate) is an active-site residue. Histidine 204 functions as the Proton acceptor in the catalytic mechanism. Residue glutamate 206 is part of the active site.

The protein belongs to the MetA family.

The enzyme catalyses L-serine + acetyl-CoA = O-acetyl-L-serine + CoA. Its pathway is amino-acid biosynthesis; L-cysteine biosynthesis; L-cysteine from L-serine: step 1/2. Functionally, catalyzes the formation of O-acetylserine (OAS) from L-serine and acetyl-CoA. To a lesser extent, is also able to use succinyl-CoA and propionyl-CoA as acyl donors, but not butyryl-CoA. Does not acylate D-serine and L-homoserine. This Lacticaseibacillus casei (Lactobacillus casei) protein is Serine O-acetyltransferase.